Consider the following 158-residue polypeptide: Transcriptional regulator MraZ (158 aa).

SpoVT-AbrB domains follow at residues 7-66 and 95-138; these read KEQH…EPSV and LDCV…APEK.

This sequence belongs to the MraZ family. Forms oligomers.

The protein resides in the cytoplasm. It is found in the nucleoid. The protein is Transcriptional regulator MraZ of Prosthecochloris aestuarii (strain DSM 271 / SK 413).